The following is a 290-amino-acid chain: MSFRIATRKSKLALVQTDYVIDLLALKFKMQCEKVLIRTEGDRKLDVSLDKIGGKGVFVKDIEKALIEKRAQAAVHSMKDMPNELLDLFEIIAMPVREDVRDVFISPEGIKFLDLPKGAVIGTSSIRRAVQIKNLRHDIEIVPIRGNIETRVRKMKEEKLDGIVLAAAGVKRLGMSEIITEYFNPFEFIPAVGQGAIGVEILKNSEYASTLGKIDNEDIRMGVEAERSFLKKLQGDCHTPVGAYSVIEGEILNITGIFQVGNKLIKKDVCGDKWDYIALGESLGEKIISG.

S-(dipyrrolylmethanemethyl)cysteine is present on cysteine 237.

It belongs to the HMBS family. In terms of assembly, monomer. Dipyrromethane serves as cofactor.

The enzyme catalyses 4 porphobilinogen + H2O = hydroxymethylbilane + 4 NH4(+). The protein operates within porphyrin-containing compound metabolism; protoporphyrin-IX biosynthesis; coproporphyrinogen-III from 5-aminolevulinate: step 2/4. Functionally, tetrapolymerization of the monopyrrole PBG into the hydroxymethylbilane pre-uroporphyrinogen in several discrete steps. The protein is Porphobilinogen deaminase of Clostridium kluyveri (strain NBRC 12016).